The chain runs to 1076 residues: Protein EXPORTIN 1B (1076 aa).

Residues 37–103 (ADNILRDLKA…KNYISDVIVQ (67 aa)) enclose the Importin N-terminal domain. 11 HEAT repeats span residues 135–171 (AKWK…EVFD), 232–267 (IFES…LNFG), 282–319 (MNQL…FFTS), 475–514 (DTEK…SMVV), 564–601 (KFLK…KCKR), 613–650 (PFVS…AESD), 683–720 (LKEP…IFLD), 757–794 (REIL…DYAR), 799–836 (ARES…CTLE), 895–935 (ETGL…VLTD), and 943–988 (KLHV…YTTK).

Belongs to the exportin family. As to expression, present in mature pollen grains, unpollinated pistils, and 2-week-old seedlings.

The protein resides in the nucleus. The protein localises to the nuclear pore complex. It is found in the nucleus membrane. Its function is as follows. Receptor for the leucine-rich nuclear export signal (NES). Binds cooperatively to the NES on its target protein and to the small GTPase Ran in its active GTP-bound form. Required for the maternal-to-embryonic transition and during gametophyte development. The protein is Protein EXPORTIN 1B of Arabidopsis thaliana (Mouse-ear cress).